The following is a 314-amino-acid chain: MAQFHYECVESKTDKDRSQYGKFIIEPLARGQGTTVGNALRRVLLSNLEGTAITSVRIAGVNHEFATIKGVREDVLEILLNMKEVVLKSYSEQPQIGRLRVEGPATVTADRFDVPSEVEVIDRSQYIATLSPGSILEMEFRIEKGTGYKAVDRTRDDVATLDFLQIDAIFMPVRKVNYTIEDAHIGSSLEQDRLIMDIWTNGSYTPQDALSNAAGILMSLFEPLKDITNMADIPSGETTDPTSQIPIEELQLSVRAYNCLKRAQINSVADLLDYSQEDLLEIKNFGQKSAEEVIEALQKRLGITLPQEKVAKAT.

Residues 1-228 form an alpha N-terminal domain (alpha-NTD) region; the sequence is MAQFHYECVE…SLFEPLKDIT (228 aa). Residues 240-314 form an alpha C-terminal domain (alpha-CTD) region; the sequence is DPTSQIPIEE…LPQEKVAKAT (75 aa).

The protein belongs to the RNA polymerase alpha chain family. As to quaternary structure, in cyanobacteria the RNAP catalytic core is composed of 2 alpha, 1 beta, 1 beta', 1 gamma and 1 omega subunit. When a sigma factor is associated with the core the holoenzyme is formed, which can initiate transcription.

The enzyme catalyses RNA(n) + a ribonucleoside 5'-triphosphate = RNA(n+1) + diphosphate. Its function is as follows. DNA-dependent RNA polymerase catalyzes the transcription of DNA into RNA using the four ribonucleoside triphosphates as substrates. In Trichodesmium erythraeum (strain IMS101), this protein is DNA-directed RNA polymerase subunit alpha.